The following is a 925-amino-acid chain: Aspulvinone E synthetase melA (925 aa).

Residues 11-434 are adenylation (A) domain; it reads ETAAARNGDG…GGRAKETIII (424 aa). Positions 564 to 644 constitute a Carrier domain; that stretch reads SPKNDFEKGL…ELAAALDNLY (81 aa). Position 601 is an O-(pantetheine 4'-phosphoryl)serine (S601). The segment at 663 to 923 is thioesterase (TE) domain; it reads PLWLVHPGAG…KILRSALAER (261 aa).

Belongs to the NRP synthetase family.

The protein localises to the cytoplasm. It carries out the reaction 2 3-(4-hydroxyphenyl)pyruvate + AH2 + 2 ATP + O2 = aspulvinone E + A + 2 AMP + CO2 + 2 diphosphate + H2O + H(+). Functionally, nonribosomal peptide synthase; part of the gene cluster that mediates the biosynthesis of Asp-melanin, a pigment that confers resistance against UV light and hampers phagocytosis by soil amoeba. The nonribosomal peptide synthase melA converts 4-hydroxyphenylpyruvate (4-HPPA) to aspulvinone E. The tyrosinase tyrP then performs hydroxylations of both aromatic moieties of aspulvinone E. The product of tyrP is highly unstable, and, due to the high reactivity of methides and ortho-diquinones, the polymeric Asp-melanin forms spontaneously. The polypeptide is Aspulvinone E synthetase melA (Aspergillus terreus (strain NIH 2624 / FGSC A1156)).